The primary structure comprises 383 residues: Chaperone protein DnaJ (383 aa).

Residues Asp5–Gly70 form the J domain. A CR-type zinc finger spans residues Gly137–Glu215. Zn(2+) is bound by residues Cys150, Cys153, Cys167, Cys170, Cys189, Cys192, Cys203, and Cys206. CXXCXGXG motif repeat units lie at residues Cys150 to Gly157, Cys167 to Gly174, Cys189 to Gly196, and Cys203 to Gly210.

This sequence belongs to the DnaJ family. In terms of assembly, homodimer. Zn(2+) is required as a cofactor.

The protein localises to the cytoplasm. Participates actively in the response to hyperosmotic and heat shock by preventing the aggregation of stress-denatured proteins and by disaggregating proteins, also in an autonomous, DnaK-independent fashion. Unfolded proteins bind initially to DnaJ; upon interaction with the DnaJ-bound protein, DnaK hydrolyzes its bound ATP, resulting in the formation of a stable complex. GrpE releases ADP from DnaK; ATP binding to DnaK triggers the release of the substrate protein, thus completing the reaction cycle. Several rounds of ATP-dependent interactions between DnaJ, DnaK and GrpE are required for fully efficient folding. Also involved, together with DnaK and GrpE, in the DNA replication of plasmids through activation of initiation proteins. This is Chaperone protein DnaJ from Paramagnetospirillum magneticum (strain ATCC 700264 / AMB-1) (Magnetospirillum magneticum).